We begin with the raw amino-acid sequence, 612 residues long: Cytoplasmic dynein 1 intermediate chain 2 (612 aa).

2 stretches are compositionally biased toward basic and acidic residues: residues 1–13 (MSDK…ELER) and 20–43 (QIRE…KKEA). The disordered stretch occupies residues 1-188 (MSDKSDLKAE…PHELTEEEKQ (188 aa)). S2 carries the N-acetylserine modification. S51 is subject to Diphosphoserine. 2 positions are modified to phosphoserine: S51 and S84. Low complexity predominate over residues 82-91 (PSSKSVSTPS). At T89 the chain carries Phosphothreonine. Phosphoserine is present on residues S91, S95, and S98. Over residues 164–188 (EKTLKKDEENDSKAPPHELTEEEKQ) the composition is skewed to basic and acidic residues. 7 WD repeats span residues 251–300 (SKHR…TTPE), 304–344 (HCQS…RTPV), 353–394 (AHTH…HPQD), 403–443 (SKAV…AGIS), 448–493 (GHQG…PLYS), 496–536 (DNSD…EVPT), and 542–581 (EGNP…AVPR).

Belongs to the dynein intermediate chain family. As to quaternary structure, homodimer. The cytoplasmic dynein 1 complex consists of two catalytic heavy chains (HCs) and a number of non-catalytic subunits presented by intermediate chains (ICs), light intermediate chains (LICs) and light chains (LCs); the composition seems to vary in respect to the IC, LIC and LC composition. The heavy chain homodimer serves as a scaffold for the probable homodimeric assembly of the respective non-catalytic subunits. The ICs and LICs bind directly to the HC dimer and the LCs assemble on the IC dimer. Interacts with DYNLT3. Interacts with DYNLT1. Interacts (dephosphorylated at Ser-84) with DCTN1. Interacts with BICD2. Interacts with SPEF2. Interacts with CFAP61. In terms of processing, the phosphorylation status of Ser-84 appears to be involved in dynactin-dependent target binding. Post-translationally, pyrophosphorylation by 5-diphosphoinositol pentakisphosphate (5-IP7) promotes interaction with DCTN1. Serine pyrophosphorylation is achieved by Mg(2+)-dependent, but enzyme independent transfer of a beta-phosphate from a inositol pyrophosphate to a pre-phosphorylated serine residue.

Its subcellular location is the cytoplasm. It is found in the cytoskeleton. In terms of biological role, acts as one of several non-catalytic accessory components of the cytoplasmic dynein 1 complex that are thought to be involved in linking dynein to cargos and to adapter proteins that regulate dynein function. Cytoplasmic dynein 1 acts as a motor for the intracellular retrograde motility of vesicles and organelles along microtubules. The intermediate chains mediate the binding of dynein to dynactin via its 150 kDa component (p150-glued) DCTN1. Involved in membrane-transport, such as Golgi apparatus, late endosomes and lysosomes. The polypeptide is Cytoplasmic dynein 1 intermediate chain 2 (Dync1i2) (Mus musculus (Mouse)).